We begin with the raw amino-acid sequence, 137 residues long: uncharacterized protein (137 aa).

The next 5 membrane-spanning stretches (helical) occupy residues A4–C26, I35–I57, I62–L84, A89–L111, and T116–I135. The EamA domain maps to V13–I135.

Its subcellular location is the cell membrane. This is an uncharacterized protein from Methanocaldococcus jannaschii (strain ATCC 43067 / DSM 2661 / JAL-1 / JCM 10045 / NBRC 100440) (Methanococcus jannaschii).